A 1080-amino-acid polypeptide reads, in one-letter code: DNA polymerase II large subunit (1080 aa).

Belongs to the archaeal DNA polymerase II family. Heterodimer of a large subunit and a small subunit.

The catalysed reaction is DNA(n) + a 2'-deoxyribonucleoside 5'-triphosphate = DNA(n+1) + diphosphate. It carries out the reaction Exonucleolytic cleavage in the 3'- to 5'-direction to yield nucleoside 5'-phosphates.. Functionally, possesses two activities: a DNA synthesis (polymerase) and an exonucleolytic activity that degrades single-stranded DNA in the 3'- to 5'-direction. Has a template-primer preference which is characteristic of a replicative DNA polymerase. This chain is DNA polymerase II large subunit, found in Picrophilus torridus (strain ATCC 700027 / DSM 9790 / JCM 10055 / NBRC 100828 / KAW 2/3).